Here is a 265-residue protein sequence, read N- to C-terminus: Sulfur carrier protein FdhD (265 aa).

Cys-107 (cysteine persulfide intermediate) is an active-site residue.

This sequence belongs to the FdhD family.

Its subcellular location is the cytoplasm. Functionally, required for formate dehydrogenase (FDH) activity. Acts as a sulfur carrier protein that transfers sulfur from IscS to the molybdenum cofactor prior to its insertion into FDH. This chain is Sulfur carrier protein FdhD, found in Staphylococcus aureus (strain NCTC 8325 / PS 47).